A 186-amino-acid chain; its full sequence is Putative 3-methyladenine DNA glycosylase (186 aa).

This sequence belongs to the DNA glycosylase MPG family.

The chain is Putative 3-methyladenine DNA glycosylase from Borreliella afzelii (strain PKo) (Borrelia afzelii).